The following is a 336-amino-acid chain: Mitochondrial thiamine diphosphate carrier 1 (336 aa).

Transmembrane regions (helical) follow at residues 11 to 27 (RRAL…GGIS), 88 to 105 (VPAL…FTVL), 127 to 150 (YLSY…FDLL), 182 to 199 (LYSG…YAGL), 230 to 246 (SVSS…AGTF), and 303 to 322 (GLFP…FVVY). 3 Solcar repeats span residues 11–111 (RRAL…LKTF), 124–210 (LSPY…FKRS), and 231–328 (VSSF…ISDW).

It belongs to the mitochondrial carrier (TC 2.A.29) family. Ubiquitous with highest expression in pollen.

The protein resides in the mitochondrion inner membrane. Mitochondrial transporter that mediates uptake of thiamine diphosphate (ThDP) into mitochondria. The protein is Mitochondrial thiamine diphosphate carrier 1 of Zea mays (Maize).